The chain runs to 97 residues: Class II hydrophobin 1 (97 aa).

Positions M1–A16 are cleaved as a signal peptide. The propeptide occupies Q17–R22. 4 cysteine pairs are disulfide-bonded: C30–C79, C40–C70, C41–C53, and C80–C91.

Belongs to the cerato-ulmin hydrophobin family. As to quaternary structure, homotetramer. Further self-assembles to form highly ordered films at water-air interfaces through intermolecular interactions.

The protein localises to the secreted. It localises to the cell wall. Aerial growth, conidiation, and dispersal of filamentous fungi in the environment rely upon a capability of their secreting small amphipathic proteins called hydrophobins (HPBs) with low sequence identity. Class I can self-assemble into an outermost layer of rodlet bundles on aerial cell surfaces, conferring cellular hydrophobicity that supports fungal growth, development and dispersal; whereas Class II form highly ordered films at water-air interfaces through intermolecular interactions but contribute nothing to the rodlet structure. Hbf1 is a class II hydrophobin that has a role in hyphal development and is in particular required for the formation of aerial hyphae. In Hypocrea jecorina (Trichoderma reesei), this protein is Class II hydrophobin 1.